The following is a 1135-amino-acid chain: LRR receptor-like serine/threonine-protein kinase RGI2 (1135 aa).

The signal sequence occupies residues 1–35 (MSLQMPIPRKKALTVSHFSITLSLFLAFFISSTSA). Residues 36 to 723 (STNEVSALIS…QRGVHSHRLR (688 aa)) lie on the Extracellular side of the membrane. Cys-69 and Cys-76 are joined by a disulfide. Residues Asn-101 and Asn-117 are each glycosylated (N-linked (GlcNAc...) asparagine). 4 LRR repeats span residues 105–129 (FTSL…IGDC), 130–153 (SELI…LGKL), 154–177 (KNLQ…LGDC), and 179–203 (SLKN…KIST). Short sequence motifs (small peptide recognition) lie at residues 186-187 (FD), 208-211 (RAGG), 231-236 (VLGLAA), and Tyr-259. LRR repeat units lie at residues 226–250 (CRNL…LGQL), 251–274 (SKLQ…LGNC), 276–298 (ELIN…LGKL), 299–323 (QNLE…GFMK), 325–345 (LNAI…SFGN), 346–370 (LSNL…LSNC), 372–395 (KLVQ…GLLK), 397–418 (LNIF…LAGC), 419–442 (QNLQ…LFQL), 444–466 (NLTK…IGNC), 467–490 (TSLV…IGFL), 491–514 (QNLS…ISNC), 516–538 (QLQM…LSSL), 539–562 (TKLQ…LGHL), 564–586 (SLNR…LGHC), 587–610 (TNLQ…LFDI), 612–634 (DLDI…RISA), 635–658 (LNRL…LSGL), and 659–683 (ENLV…VFRQ). Asn-273 carries N-linked (GlcNAc...) asparagine glycosylation. A Small peptide recognition motif is present at residues 281–283 (FLY). The Small peptide recognition motif lies at 329–332 (DLSM). Asn-345 carries N-linked (GlcNAc...) asparagine glycosylation. The Small peptide recognition motif lies at 351–353 (ELM). 2 N-linked (GlcNAc...) asparagine glycosylation sites follow: Asn-358 and Asn-369. Short sequence motifs (small peptide recognition) lie at residues 399-403 (IFLGW) and 425-428 (DLSQ). N-linked (GlcNAc...) asparagine glycosylation is present at Asn-444. A Small peptide recognition motif is present at residues 447 to 451 (KLLLI). Asn-465 carries N-linked (GlcNAc...) asparagine glycosylation. The Small peptide recognition signature appears at 471–473 (RLR). N-linked (GlcNAc...) asparagine glycans are attached at residues Asn-492, Asn-502, Asn-521, and Asn-524. 2 N-linked (GlcNAc...) asparagine glycosylation sites follow: Asn-598 and Asn-618. 2 N-linked (GlcNAc...) asparagine glycosylation sites follow: Asn-665 and Asn-707. A helical membrane pass occupies residues 724–744 (IAIGLLISVTAVLAVLGVLAV). Topologically, residues 745 to 1135 (IRAKQMIRDD…ATSNVRPNLK (391 aa)) are cytoplasmic. Thr-777 carries the post-translational modification Phosphothreonine. The 282-residue stretch at 785–1066 (LVEGNVIGKG…KDVAAMLSEI (282 aa)) folds into the Protein kinase domain. ATP-binding positions include 791–799 (IGKGCSGIV) and Lys-813. A phosphotyrosine mark is found at Tyr-868 and Tyr-907. Asp-920 (proton acceptor) is an active-site residue. Residues Tyr-963 and Tyr-970 each carry the phosphotyrosine modification. The tract at residues 1077–1135 (DGCSGSCNNGRERGKDDSTSSVMQQTAKYLRSSSTSFSASSLLYSSSSSATSNVRPNLK) is disordered. The segment covering 1108-1128 (SSSTSFSASSLLYSSSSSATS) has biased composition (low complexity).

It belongs to the protein kinase superfamily. Ser/Thr protein kinase family. Binds to RGF peptides such as RGF1, GLV5/CLEL1/RGF2, GLV7/CLEL3/RGF3, GLV3/RGF4, GLV10/CLEL7/RGF5 and RGF10/CLELN; these interactions trigger the formation of heterodimers with SERK1. Interacts with UBP13. Post-translationally, phosphorylated and ubiquitinated upon interaction with RGF1, thus leading to activation a subsequent degradation. Stabilized by UBP12 and UBP13-mediated deubiquitination. Autophosphorylated. As to expression, specific to root meristems, especially in lateral root meristems (LRM).

It is found in the membrane. It catalyses the reaction L-seryl-[protein] + ATP = O-phospho-L-seryl-[protein] + ADP + H(+). The catalysed reaction is L-threonyl-[protein] + ATP = O-phospho-L-threonyl-[protein] + ADP + H(+). Functionally, together with RGI1, RGI3, RGI4 and RGI5, acts as a receptor of RGF peptides (e.g. RGF1, GLV5/CLEL1/RGF2, GLV7/CLEL3/RGF3, GLV3/RGF4, GLV10/CLEL7/RGF5 and RGF10/CLELN), peptide hormones which maintain the postembryonic root stem cell niche by regulating the expression levels and patterns of the transcription factor PLETHORA (PLT, e.g. PLT1 and PLT2). Links RGF peptides signal with their downstream components. This chain is LRR receptor-like serine/threonine-protein kinase RGI2, found in Arabidopsis thaliana (Mouse-ear cress).